Reading from the N-terminus, the 272-residue chain is Universal stress protein MT2699 (272 aa).

ATP is bound by residues G15, 109 to 115, and 123 to 124; these read GSVGIGR and ST.

This sequence belongs to the universal stress protein A family.

The polypeptide is Universal stress protein MT2699 (Mycobacterium tuberculosis (strain CDC 1551 / Oshkosh)).